The chain runs to 550 residues: DNA mismatch repair protein MutL (550 aa).

It belongs to the DNA mismatch repair MutL/HexB family.

Its function is as follows. This protein is involved in the repair of mismatches in DNA. It is required for dam-dependent methyl-directed DNA mismatch repair. May act as a 'molecular matchmaker', a protein that promotes the formation of a stable complex between two or more DNA-binding proteins in an ATP-dependent manner without itself being part of a final effector complex. The sequence is that of DNA mismatch repair protein MutL from Microcystis aeruginosa (strain NIES-843 / IAM M-2473).